We begin with the raw amino-acid sequence, 307 residues long: Taste receptor type 2 member 10 (307 aa).

Residues 1–6 are Extracellular-facing; that stretch reads MLSVVE. A helical membrane pass occupies residues 7 to 27; sequence GILILVVISESVFGVLGNGFI. At 28–42 the chain is on the cytoplasmic side; that stretch reads GLVNCIDCAKNKLST. A helical membrane pass occupies residues 43-63; that stretch reads IGFILTGLAISRIFLIWIIIT. Topologically, residues 64 to 100 are extracellular; that stretch reads DGFIQIFSPDVYASGNLIEYISYFWVITNQSSIWFAT. An N-linked (GlcNAc...) asparagine glycan is attached at N92. Residues 101–121 traverse the membrane as a helical segment; the sequence is SLSIFYFLKIANFSNYIFLWL. At 122-126 the chain is on the cytoplasmic side; it reads KSRIN. The chain crosses the membrane as a helical span at residues 127–147; sequence RVLPLLMGFLLISCLLNFAYI. Topologically, residues 148–179 are extracellular; that stretch reads VKILNDLKMKNDTVWRLNMYKSEYFIKQLLLN. N158 carries N-linked (GlcNAc...) asparagine glycosylation. A helical membrane pass occupies residues 180–200; it reads LGVIFFFTLSLITSVLLIISL. Residues 201–227 lie on the Cytoplasmic side of the membrane; it reads WRHNRQMQSNVTGLRDSITEAHVKAMK. Residues 228 to 248 traverse the membrane as a helical segment; the sequence is VLISFIILFILYFIGIAIEIS. The Extracellular segment spans residues 249–257; sequence YFTVPENKL. The chain crosses the membrane as a helical span at residues 258–278; it reads LLIFGMTTTAIYPWGHSFILI. Over 279 to 307 the chain is Cytoplasmic; the sequence is LGNSKLKQASLRVLQQLKCCEERKNLRAT.

The protein belongs to the G-protein coupled receptor T2R family.

It is found in the membrane. Functionally, receptor that may play a role in the perception of bitterness and is gustducin-linked. May play a role in sensing the chemical composition of the gastrointestinal content. The activity of this receptor may stimulate alpha gustducin, mediate PLC-beta-2 activation and lead to the gating of TRPM5. The chain is Taste receptor type 2 member 10 (TAS2R10) from Papio hamadryas (Hamadryas baboon).